The sequence spans 1202 residues: Adenine-specific methyltransferase PglX (1202 aa).

It belongs to the methyltransferase superfamily. PglX adenine methyltransferase family.

The catalysed reaction is a 2'-deoxyadenosine in DNA + S-adenosyl-L-methionine = an N(6)-methyl-2'-deoxyadenosine in DNA + S-adenosyl-L-homocysteine + H(+). Its function is as follows. BREX systems (bacteriophage exclusion) provide immunity against bacteriophage. Part of a type 1 BREX system which protects against dsDNA phage. This system allows phage adsorption but prevents phage DNA replication, without degradation of the phage DNA. Methylation of bacterial DNA by this protein guides self/non-self discrimination. Probably methylates the adenine in the fifth position of the hexamer 5'-ACRCAG-3' in genomic DNA. N(6)-methylated adenine on the fifth position of 5'-ACRCAG-3' is found in the genome; there are 1906 sites in the genomic DNA. This chain is Adenine-specific methyltransferase PglX, found in Lacticaseibacillus casei (strain Zhang) (Lactobacillus casei).